A 493-amino-acid polypeptide reads, in one-letter code: Probable phospho-2-dehydro-3-deoxyheptonate aldolase, chloroplastic (493 aa).

Residues 1-58 (MAMSNTSALASKLLPSCKPHQPTLTFFSPSTTCQKKPRSSRPISAAVHVTQPPKTPIS) constitute a chloroplast transit peptide.

Belongs to the class-II DAHP synthase family.

It is found in the plastid. The protein localises to the chloroplast. The catalysed reaction is D-erythrose 4-phosphate + phosphoenolpyruvate + H2O = 7-phospho-2-dehydro-3-deoxy-D-arabino-heptonate + phosphate. It functions in the pathway metabolic intermediate biosynthesis; chorismate biosynthesis; chorismate from D-erythrose 4-phosphate and phosphoenolpyruvate: step 1/7. This is Probable phospho-2-dehydro-3-deoxyheptonate aldolase, chloroplastic (DHS1) from Catharanthus roseus (Madagascar periwinkle).